The primary structure comprises 581 residues: ATP-dependent lipid A-core flippase (581 aa).

Helical transmembrane passes span 15 to 35 (LWPIISPFKSGLIISIVALII), 62 to 82 (ISIWMPLAIVALMLSRGSSGF), 152 to 172 (IIGLFFMMFFHSWKLSSVLII), 252 to 272 (IIIQFISSITLAVILYISSLP), and 274 to 294 (IIDELTAGTITVIFTSMIALM). The region spanning 27–309 (IISIVALIIN…LTNVNANFQK (283 aa)) is the ABC transmembrane type-1 domain. The ABC transporter domain occupies 341–577 (IKFKNITFTY…KGVYAQIYRL (237 aa)). 375 to 382 (GSSGAGKS) is an ATP binding site.

This sequence belongs to the ABC transporter superfamily. Lipid exporter (TC 3.A.1.106) family. As to quaternary structure, homodimer.

It is found in the cell membrane. It catalyses the reaction ATP + H2O + lipid A-core oligosaccharideSide 1 = ADP + phosphate + lipid A-core oligosaccharideSide 2.. In terms of biological role, involved in lipopolysaccharide (LPS) biosynthesis. Translocates lipid A-core from the inner to the outer leaflet of the inner membrane. Transmembrane domains (TMD) form a pore in the inner membrane and the ATP-binding domain (NBD) is responsible for energy generation. The polypeptide is ATP-dependent lipid A-core flippase (Wigglesworthia glossinidia brevipalpis).